Reading from the N-terminus, the 611-residue chain is Zinc metalloproteinase nas-31 (611 aa).

Residues 1–17 (MILQLLFYSLFTHLAVS) form the signal peptide. Positions 18–158 (QIDVNQALNQ…TVSTASRARR (141 aa)) are excised as a propeptide. N-linked (GlcNAc...) asparagine glycosylation is found at Asn-53 and Asn-67. A compositionally biased stretch (polar residues) spans 82–95 (NAGTNQENGATEQQ). A disordered region spans residues 82-103 (NAGTNQENGATEQQKPLREKPR). The Peptidase M12A domain maps to 159–354 (QAYRDRYYPS…SMMNEHYKCK (196 aa)). N-linked (GlcNAc...) asparagine glycosylation occurs at Asn-200. Cystine bridges form between Cys-203-Cys-353, Cys-224-Cys-243, Cys-357-Cys-376, Cys-379-Cys-390, Cys-397-Cys-428, Cys-455-Cys-476, Cys-532-Cys-564, Cys-539-Cys-557, and Cys-548-Cys-561. His-251 provides a ligand contact to Zn(2+). Residue Glu-252 is part of the active site. His-255 and His-261 together coordinate Zn(2+). Positions 340 to 396 (GFYDISMMNEHYKCKELCPAASSAQCKNGGFPSPRNCAICICPSGYGGILCDQRPPG) constitute an EGF-like domain. The CUB domain occupies 397–516 (CGDSVTATTT…LEYRAVTPSV (120 aa)). N-linked (GlcNAc...) asparagine glycosylation occurs at Asn-424. One can recognise a ShKT domain in the interval 532-564 (CQDLHPNCDFYKFFGMCRSKKIRSNCKFTCHDC).

Zn(2+) serves as cofactor. In terms of tissue distribution, expressed in excretory cell and in amphid and phasmid sheath glia.

It is found in the secreted. Functionally, metalloprotease. This is Zinc metalloproteinase nas-31 (nas-31) from Caenorhabditis elegans.